Reading from the N-terminus, the 351-residue chain is MVPMDRLLQIVRRFEFLEARLSAGAAPAEIAALSREYAELKPVVAEIAAYRTALEDLAEAEAMLADPEMRALAEDELPRLRARIPEMEQALRLALLPRDAADARPAILEIRPGTGGEEAALFAGDLLRMYQRYAEAQGWRFELLDLAPSELGGIREATARIEGEGAFARLKYESGVHRVQRVPETEAQGRIHTSAATVAVLPEAEEVDIAIPAADIRIDTMRSSGAGGQHVNTTDSAVRITHLPTGIVVTSSEKSQHRNREIAMQVLRARLYDLERQRLAEARSADRKAQVGSGDRSERIRTYNFPQGRMTDHRINLTLYALPQIMAGDLAEVIAALTAHDQAARLAEMEA.

An N5-methylglutamine modification is found at Q229.

The protein belongs to the prokaryotic/mitochondrial release factor family. Post-translationally, methylated by PrmC. Methylation increases the termination efficiency of RF1.

The protein localises to the cytoplasm. In terms of biological role, peptide chain release factor 1 directs the termination of translation in response to the peptide chain termination codons UAG and UAA. In Cereibacter sphaeroides (strain ATCC 17025 / ATH 2.4.3) (Rhodobacter sphaeroides), this protein is Peptide chain release factor 1.